Here is an 859-residue protein sequence, read N- to C-terminus: Pre-mRNA-splicing factor SYF1 (859 aa).

HAT repeat units lie at residues 17–49 (NIRN…YWKE), 52–84 (RTDK…WEST), 88–108 (VETS…VRDC), 123–157 (YDLA…FVEE), 177–219 (DEAE…ERYL), 238–271 (RDNI…FELN), 427–459 (VYSE…LYWR), 461–482 (NAIS…PYIE), 520–554 (ILLE…YLEA), 599–633 (YEVM…VATS), 639–675 (LSPE…FEER), 685–718 (EILR…KAES), 720–754 (LGPS…FESS), and 756–790 (GETI…FELK).

This sequence belongs to the crooked-neck family. In terms of assembly, belongs to the NTC complex (or PRP19-associated complex), composed of at least CEF1, CLF1, ISY1, NTC20, SNT309, SYF1, SYF2, and PRP19. The NTC complex associates with the spliceosome after the release of the U1 and U4 snRNAs and forms the CWC spliceosome subcomplex (or CEF1-associated complex) reminiscent of a late-stage spliceosome composed also of the U2, U5 and U6 snRNAs and at least BUD13, BUD31, BRR2, CDC40, CUS1, CWC2, CWC15, CWC21, CWC22, CWC23, CWC24, CWC25, CWC27, ECM2, HSH155, IST3, LEA1, MSL1, PRP8, PRP9, PRP11, PRP21, PRP22, PRP45, PRP46, SLU7, SMB1, SMD1, SMD2, SMD3, SMX2, SMX3, SNU114, SPP2, RSE1 and YJU2. Interacts with CEF1, CLF1, ISY1, NTC20, PRP22, PRP46 and SYF2.

The protein resides in the nucleus. Involved in pre-mRNA splicing and cell cycle control. As a component of the NTC complex (or PRP19-associated complex), associates to the spliceosome to mediate conformational rearrangement or to stabilize the structure of the spliceosome after U4 snRNA dissociation, which leads to spliceosome maturation. The protein is Pre-mRNA-splicing factor SYF1 (SYF1) of Saccharomyces cerevisiae (strain ATCC 204508 / S288c) (Baker's yeast).